The sequence spans 727 residues: Protein TITANIA (727 aa).

The disordered stretch occupies residues 1–136 (MFGDSDGSKD…LASLLQPVPA (136 aa)). Residues 14-25 (GAPPSTTDPPFP) show a composition bias toward pro residues. Positions 67–88 (DDGKHCVERDFLHLSAPKRGDP) are enriched in basic and acidic residues. Residues 104–117 (DSLQLSLSLNSDGP) are compositionally biased toward low complexity. The PHD-type zinc finger occupies 406 to 470 (ACTCSVCHKF…QFQCLACNHS (65 aa)). Residues 629-697 (VKCKEAEAKL…LEELKMLENS (69 aa)) adopt a coiled-coil conformation.

As to expression, widely expressed.

The protein localises to the nucleus. Its function is as follows. Probable transcription factor that functions as a regulator of metal transporter genes responsible for essential metals delivery to shoots and normal plant growth. Required for the maintenance of metal transporter gene expression, such as IRT1, IRT2, ZIP1, ZIP9, NRAMP1 and NRAMP5. The sequence is that of Protein TITANIA from Oryza sativa subsp. japonica (Rice).